A 104-amino-acid chain; its full sequence is ATP-dependent Clp protease adapter protein ClpS (104 aa).

It belongs to the ClpS family. In terms of assembly, binds to the N-terminal domain of the chaperone ClpA.

Functionally, involved in the modulation of the specificity of the ClpAP-mediated ATP-dependent protein degradation. The chain is ATP-dependent Clp protease adapter protein ClpS from Desulforapulum autotrophicum (strain ATCC 43914 / DSM 3382 / VKM B-1955 / HRM2) (Desulfobacterium autotrophicum).